The chain runs to 268 residues: Shikimate kinase (268 aa).

70-80 contributes to the ATP binding site; sequence PSGYGLKSSSA.

It belongs to the GHMP kinase family. Archaeal shikimate kinase subfamily.

The protein localises to the cytoplasm. It carries out the reaction shikimate + ATP = 3-phosphoshikimate + ADP + H(+). It participates in metabolic intermediate biosynthesis; chorismate biosynthesis; chorismate from D-erythrose 4-phosphate and phosphoenolpyruvate: step 5/7. This is Shikimate kinase (aroK) from Thermoplasma acidophilum (strain ATCC 25905 / DSM 1728 / JCM 9062 / NBRC 15155 / AMRC-C165).